A 142-amino-acid polypeptide reads, in one-letter code: Large ribosomal subunit protein uL11 (142 aa).

Belongs to the universal ribosomal protein uL11 family. As to quaternary structure, part of the ribosomal stalk of the 50S ribosomal subunit. Interacts with L10 and the large rRNA to form the base of the stalk. L10 forms an elongated spine to which L12 dimers bind in a sequential fashion forming a multimeric L10(L12)X complex. In terms of processing, one or more lysine residues are methylated.

Forms part of the ribosomal stalk which helps the ribosome interact with GTP-bound translation factors. This chain is Large ribosomal subunit protein uL11, found in Shewanella amazonensis (strain ATCC BAA-1098 / SB2B).